The following is a 476-amino-acid chain: Cytosolic iron-sulfur assembly component 3 (476 aa).

N-acetylalanine is present on Ala-2. 8 residues coordinate [4Fe-4S] cluster: Cys-24, Cys-71, Cys-74, Cys-77, Cys-190, Cys-246, Cys-395, and Cys-399.

The protein belongs to the NARF family. External component of the CIA complex. In the CIA complex, interacts directly with CIAO1 and MMS19.

In terms of biological role, component of the cytosolic iron-sulfur protein assembly (CIA) complex, a multiprotein complex that mediates the incorporation of iron-sulfur cluster into extramitochondrial Fe/S proteins. Seems to negatively regulate the level of HIF1A expression, although this effect could be indirect. This Pongo abelii (Sumatran orangutan) protein is Cytosolic iron-sulfur assembly component 3.